The chain runs to 180 residues: Segregation and condensation protein B (180 aa).

Belongs to the ScpB family. Homodimer. Homodimerization may be required to stabilize the binding of ScpA to the Smc head domains. Component of a cohesin-like complex composed of ScpA, ScpB and the Smc homodimer, in which ScpA and ScpB bind to the head domain of Smc. The presence of the three proteins is required for the association of the complex with DNA.

It localises to the cytoplasm. In terms of biological role, participates in chromosomal partition during cell division. May act via the formation of a condensin-like complex containing Smc and ScpA that pull DNA away from mid-cell into both cell halves. The chain is Segregation and condensation protein B from Staphylococcus aureus (strain Mu3 / ATCC 700698).